The sequence spans 137 residues: Large ribosomal subunit protein uL16c (137 aa).

This sequence belongs to the universal ribosomal protein uL16 family. As to quaternary structure, part of the 50S ribosomal subunit.

It is found in the plastid. Its subcellular location is the chloroplast. The chain is Large ribosomal subunit protein uL16c from Adiantum capillus-veneris (Maidenhair fern).